A 197-amino-acid polypeptide reads, in one-letter code: Protein lin-7 homolog C (197 aa).

Ala-2 is modified (N-acetylalanine). A Kinase interacting site motif is present at residues 2 to 13 (AALGEPVRLERD). Residues 10–65 (LERDICRAIELLEKLQRSGEVPPQKLQALQRVLQSEFCNAVREVYEHVYETVDISS) enclose the L27 domain. One can recognise a PDZ domain in the interval 93 to 175 (VVELPKTEEG…KVKLVVRYTP (83 aa)).

Belongs to the lin-7 family. Forms a complex with CASK and APBA1 or CASKIN1. Component of the brain-specific heterotrimeric complex (LIN-10-LIN-2-LIN-7 complex) composed of at least APBA1, CASK, and LIN7, which associates with the motor protein KIF17 to transport vesicles along microtubules. Can also interact with other modular proteins containing protein-protein interaction domains like PALS1, PALS2, MPP7, DLG1, DLG2 and DLG3 through its L27 domain. Interacts with DLG4 and GRIN2B as well as CDH1 and CTNNB1, the channels KCNJ12/Kir2.2, KCNJ4/Kir2.3 and probably KCNJ2/Kir2.1 and SLC6A12/BGT-1 via its PDZ domain. The association of LIN7A with cadherin and beta-catenin is calcium-dependent, occurs at synaptic junctions and requires the actin cytoskeleton. Interacts with EGFR, ERBB2, ERBB3 and ERBB4 with both PDZ and KID domains. Associates with KIF17 via APBA1. Interacts with HTR4. Forms a tripartite complex composed of DLG1, MPP7 and LIN7 (LIN7A or LIN7C). Interacts with MAPK12.

The protein localises to the cell membrane. Its subcellular location is the basolateral cell membrane. It is found in the cell junction. It localises to the postsynaptic density membrane. The protein resides in the tight junction. The protein localises to the synapse. Its subcellular location is the synaptosome. In terms of biological role, plays a role in establishing and maintaining the asymmetric distribution of channels and receptors at the plasma membrane of polarized cells. Forms membrane-associated multiprotein complexes that may regulate delivery and recycling of proteins to the correct membrane domains. The tripartite complex composed of LIN7 (LIN7A, LIN7B or LIN7C), CASK and APBA1 associates with the motor protein KIF17 to transport vesicles containing N-methyl-D-aspartate (NMDA) receptor subunit NR2B along microtubules. This complex may have the potential to couple synaptic vesicle exocytosis to cell adhesion in brain. Ensures the proper localization of GRIN2B (subunit 2B of the NMDA receptor) to neuronal postsynaptic density and may function in localizing synaptic vesicles at synapses where it is recruited by beta-catenin and cadherin. Required to localize Kir2 channels, GABA transporter (SLC6A12) and EGFR/ERBB1, ERBB2, ERBB3 and ERBB4 to the basolateral membrane of epithelial cells. This chain is Protein lin-7 homolog C (LIN7C), found in Bos taurus (Bovine).